The primary structure comprises 259 residues: Large ribosomal subunit protein uL3m (259 aa).

The N-terminal 15 residues, 1-15 (MQSRFLISPTLIRTF), are a transit peptide targeting the mitochondrion. The segment covering 176–197 (ASHGASLSHRTPGSTGQNTTPS) has biased composition (polar residues). The segment at 176–208 (ASHGASLSHRTPGSTGQNTTPSRVLPGRKMAGH) is disordered.

It belongs to the universal ribosomal protein uL3 family. As to quaternary structure, component of the mitochondrial large ribosomal subunit (mt-LSU). Mature yeast 74S mitochondrial ribosomes consist of a small (37S) and a large (54S) subunit. The 37S small subunit contains a 15S ribosomal RNA (15S mt-rRNA) and at least 32 different proteins. The 54S large subunit contains a 21S rRNA (21S mt-rRNA) and at least 45 different proteins.

It localises to the cytoplasm. The protein localises to the mitochondrion. In terms of biological role, component of the mitochondrial ribosome (mitoribosome), a dedicated translation machinery responsible for the synthesis of mitochondrial genome-encoded proteins, including at least some of the essential transmembrane subunits of the mitochondrial respiratory chain. The mitoribosomes are attached to the mitochondrial inner membrane and translation products are cotranslationally integrated into the membrane. This is Large ribosomal subunit protein uL3m (mrpl9) from Schizosaccharomyces pombe (strain 972 / ATCC 24843) (Fission yeast).